Consider the following 276-residue polypeptide: ATP synthase subunit delta (276 aa).

Belongs to the ATPase delta chain family. F-type ATPases have 2 components, F(1) - the catalytic core - and F(0) - the membrane proton channel. F(1) has five subunits: alpha(3), beta(3), gamma(1), delta(1), epsilon(1). F(0) has three main subunits: a(1), b(2) and c(10-14). The alpha and beta chains form an alternating ring which encloses part of the gamma chain. F(1) is attached to F(0) by a central stalk formed by the gamma and epsilon chains, while a peripheral stalk is formed by the delta and b chains.

The protein resides in the cell membrane. F(1)F(0) ATP synthase produces ATP from ADP in the presence of a proton or sodium gradient. F-type ATPases consist of two structural domains, F(1) containing the extramembraneous catalytic core and F(0) containing the membrane proton channel, linked together by a central stalk and a peripheral stalk. During catalysis, ATP synthesis in the catalytic domain of F(1) is coupled via a rotary mechanism of the central stalk subunits to proton translocation. Its function is as follows. This protein is part of the stalk that links CF(0) to CF(1). It either transmits conformational changes from CF(0) to CF(1) or is implicated in proton conduction. This is ATP synthase subunit delta from Frankia casuarinae (strain DSM 45818 / CECT 9043 / HFP020203 / CcI3).